The chain runs to 298 residues: Mitochondrial dicarboxylate/tricarboxylate transporter DTC (298 aa).

Solcar repeat units follow at residues 12–93, 103–194, and 202–292; these read WTTV…LTAK, LPLY…SAEY, and GEMS…ITKF. 6 helical membrane passes run 18–38, 68–88, 109–129, 169–189, 208–228, and 268–288; these read FVNGGASGMLATCVIQPIDMI, GLSAGLLRQATYTTARLGSFK, ALCGLTAGAIGACVGSPADLA, GCGPTVVRAMALNMGMLASYD, VGASAVSGFCAAACSLPFDFV, and FPVYCVRIAPHVMMTWIFLNQ.

This sequence belongs to the mitochondrial carrier (TC 2.A.29) family. In terms of tissue distribution, highly expressed in flower buds and at lower levels in roots, leaves and stems.

The protein resides in the mitochondrion inner membrane. Its function is as follows. Catalyzes the transport of dicarboxylates, such as oxoglutarate, oxaloacetate, malate, and succinate, and of tricarboxylates, such as citrate, isocitrate, cis-aconitate, and trans-aconitate by a counter-exchange mechanism across the inner mitochondrial membrane. Substrate preference in reconstituted proteoliposomes is oxaloacetate &gt; malonate &gt; malate &gt; maleate &gt; succinate &gt; oxoglutarate &gt; citrate &gt; trans-aconitate &gt; cis-aconitate &gt; sulfate &gt; isocitrate. May be important for plant metabolic functions requiring organic acid flux to or from the mitochondria, such as nitrogen assimilation, export of reducing equivalents from the mitochondria, and fatty acid elongation. The polypeptide is Mitochondrial dicarboxylate/tricarboxylate transporter DTC (DTC) (Arabidopsis thaliana (Mouse-ear cress)).